We begin with the raw amino-acid sequence, 1199 residues long: Transcription initiation factor TFIID subunit 2 (1199 aa).

3 disordered regions span residues 1–23 (MPLT…FESP), 1067–1102 (RPST…TKPQ), and 1136–1199 (KEST…SLSD). Residues 1093–1102 (CDSTPTTKPQ) are compositionally biased toward polar residues. The segment covering 1144 to 1171 (SDHHHHHHHEHKKKKKKHKHKHKHKHKH) has biased composition (basic residues). The segment covering 1182–1199 (TFSSPASGRSIRSPSLSD) has biased composition (polar residues). Residues Ser1185, Ser1188, Ser1194, Ser1196, and Ser1198 each carry the phosphoserine modification.

This sequence belongs to the TAF2 family. Component of the TFIID basal transcription factor complex, composed of TATA-box-binding protein TBP, and a number of TBP-associated factors (TAFs), including TAF1, TAF2, TAF3, TAF4, TAF5, TAF6, TAF7, TAF8, TAF9, TAF10, TAF11, TAF12 and TAF13. Interacts with TAF2C1. Component of the TFTC-HAT complex. In terms of tissue distribution, expressed in all tissues tested.

It localises to the nucleus. Functionally, the TFIID basal transcription factor complex plays a major role in the initiation of RNA polymerase II (Pol II)-dependent transcription. TFIID recognizes and binds promoters with or without a TATA box via its subunit TBP, a TATA-box-binding protein, and promotes assembly of the pre-initiation complex (PIC). The TFIID complex consists of TBP and TBP-associated factors (TAFs), including TAF1, TAF2, TAF3, TAF4, TAF5, TAF6, TAF7, TAF8, TAF9, TAF10, TAF11, TAF12 and TAF13. TAF2 forms a promoter DNA binding subcomplex of TFIID, together with TAF7 and TAF1. This chain is Transcription initiation factor TFIID subunit 2 (TAF2), found in Homo sapiens (Human).